Here is a 202-residue protein sequence, read N- to C-terminus: dTTP/UTP pyrophosphatase (202 aa).

The active-site Proton acceptor is D83.

Belongs to the Maf family. YhdE subfamily. Requires a divalent metal cation as cofactor.

It localises to the cytoplasm. The catalysed reaction is dTTP + H2O = dTMP + diphosphate + H(+). It carries out the reaction UTP + H2O = UMP + diphosphate + H(+). Its function is as follows. Nucleoside triphosphate pyrophosphatase that hydrolyzes dTTP and UTP. May have a dual role in cell division arrest and in preventing the incorporation of modified nucleotides into cellular nucleic acids. This Polaromonas sp. (strain JS666 / ATCC BAA-500) protein is dTTP/UTP pyrophosphatase.